The sequence spans 485 residues: Protein LAZ1 (485 aa).

Topologically, residues 1–19 are cytoplasmic; that stretch reads MDILKSYHLLAAAYSAPAW. Residues 20-40 traverse the membrane as a helical segment; the sequence is ASFMAGAFLVLTLSLSLFLVF. The Lumenal portion of the chain corresponds to 41–53; sequence DHLSTYKNPEEQK. A helical transmembrane segment spans residues 54–74; it reads FLIGVILMVPCYSIESFASLV. Over 75-167 the chain is Cytoplasmic; sequence KPSISVDCGI…QVVKFGIVQY (93 aa). A helical membrane pass occupies residues 168–188; the sequence is MIIKSLTALTALILEAFGVYC. The Lumenal portion of the chain corresponds to 189–196; sequence EGEFKWGC. Residues 197-217 form a helical membrane-spanning segment; sequence GYPYLAVVLNFSQSWALYCLV. Topologically, residues 218–241 are cytoplasmic; it reads QFYGATKDELAHIQPLAKFLTFKS. The helical transmembrane segment at 242 to 262 threads the bilayer; that stretch reads IVFLTWWQGVAIALLSSLGLF. Residues 263–277 are Lumenal-facing; it reads KSSIAQSLQLKTSVQ. Residues 278-298 form a helical membrane-spanning segment; that stretch reads DFIICIEMGIASVVHLYVFPA. At 299-485 the chain is on the cytoplasmic side; sequence KPYGLMGDRF…VRGRRWITKD (187 aa). Positions 384 to 415 form a coiled coil; that stretch reads MEKSITKFNEKLHKISQNIKKHDKEKRRVKDD. The segment at 400 to 485 is disordered; that stretch reads QNIKKHDKEK…VRGRRWITKD (86 aa). Basic and acidic residues predominate over residues 403 to 416; it reads KKHDKEKRRVKDDS. Residues 455 to 469 are compositionally biased toward polar residues; that stretch reads GYTSAESGGESSSDQ. Residues 476 to 485 are compositionally biased toward basic and acidic residues; that stretch reads VRGRRWITKD.

The protein belongs to the TMEM184 family.

It localises to the endomembrane system. The protein localises to the cell membrane. It is found in the cytoplasm. Its subcellular location is the cytosol. Functionally, required for programmed cell death (PCD) associated with hypersensitive response (HR). Involved both in the induction of EDS1/PAD4 mediated HR and in accelerated cell death in the acd11 mutant. Not required for HR induction elicited through pathways exclusively dependent on CC-NB-LRR resistance proteins. The polypeptide is Protein LAZ1 (Arabidopsis thaliana (Mouse-ear cress)).